The chain runs to 446 residues: Coiled-coil domain-containing protein 112 (446 aa).

Coiled-coil stretches lie at residues 35–116 and 219–400; these read KTER…RKID and ERKK…NVSR. Disordered stretches follow at residues 253–272 and 390–430; these read FHNK…KKQK and LKEK…LLHI. Residues 255 to 268 are compositionally biased toward basic and acidic residues; it reads NKQEDNQKQKEEQR.

It localises to the cytoplasm. It is found in the cytoskeleton. The protein localises to the microtubule organizing center. Its subcellular location is the centrosome. The protein resides in the centriolar satellite. The polypeptide is Coiled-coil domain-containing protein 112 (CCDC112) (Homo sapiens (Human)).